A 219-amino-acid chain; its full sequence is Protein-methionine-sulfoxide reductase heme-binding subunit MsrQ (219 aa).

5 consecutive transmembrane segments (helical) span residues 17–37 (AKPL…YAAW), 88–108 (LFAY…DMGF), 121–141 (PFIL…ATSF), 153–173 (WQLL…HFFW), and 184–204 (VFVY…NHWA).

The protein belongs to the MsrQ family. Heterodimer of a catalytic subunit (MsrP) and a heme-binding subunit (MsrQ). Requires FMN as cofactor. The cofactor is heme b.

Its subcellular location is the cell inner membrane. Functionally, part of the MsrPQ system that repairs oxidized periplasmic proteins containing methionine sulfoxide residues (Met-O), using respiratory chain electrons. Thus protects these proteins from oxidative-stress damage caused by reactive species of oxygen and chlorine generated by the host defense mechanisms. MsrPQ is essential for the maintenance of envelope integrity under bleach stress, rescuing a wide series of structurally unrelated periplasmic proteins from methionine oxidation. MsrQ provides electrons for reduction to the reductase catalytic subunit MsrP, using the quinone pool of the respiratory chain. The chain is Protein-methionine-sulfoxide reductase heme-binding subunit MsrQ from Polaromonas naphthalenivorans (strain CJ2).